A 307-amino-acid polypeptide reads, in one-letter code: Glutathione synthetase (307 aa).

Positions 120–304 constitute an ATP-grasp domain; that stretch reads KLGALRYSHL…VSDKVIEKLL (185 aa). An ATP-binding site is contributed by 146–202; the sequence is AQINHDVVVKPLGGKGGQGVIRLTKDSPGIKAMIELITSQEQLPVMMQKFIPEVKEG. The Mg(2+) site is built by Glu275 and Asn277.

The protein belongs to the prokaryotic GSH synthase family. Requires Mg(2+) as cofactor. Mn(2+) is required as a cofactor.

The enzyme catalyses gamma-L-glutamyl-L-cysteine + glycine + ATP = glutathione + ADP + phosphate + H(+). Its pathway is sulfur metabolism; glutathione biosynthesis; glutathione from L-cysteine and L-glutamate: step 2/2. This chain is Glutathione synthetase, found in Prochlorococcus marinus subsp. pastoris (strain CCMP1986 / NIES-2087 / MED4).